The primary structure comprises 226 residues: Lipid phosphate phosphatase gamma (226 aa).

Methionine 1 is modified (N-acetylmethionine). 5 helical membrane passes run 24 to 44 (LGHFLAWISLVPVFISLGGFV), 52 to 72 (ELQGIFFGIGLVISQFINEFI), 102 to 122 (FMFFFATYFSLMGCKGIGFWF), 128 to 148 (WIMNLLHWSLAVVTMYSRVYL), and 152 to 174 (TVAQVFAGAALGGIVGASWFWVV).

It belongs to the PA-phosphatase related phosphoesterase family. Expressed in root tips, root branch points, vascular tissue of cotyledons and leaves, pistil, anthers and filaments.

The protein resides in the plastid. The protein localises to the chloroplast inner membrane. Its activity is regulated as follows. Inhibited by Mg(2+). Exhibits phosphatidate phosphatase (PAP) activity in vitro. May play a primary role as PAP in plastids. The protein is Lipid phosphate phosphatase gamma (LPPG) of Arabidopsis thaliana (Mouse-ear cress).